The primary structure comprises 686 residues: Probable ferric reductase transmembrane component (686 aa).

7 consecutive transmembrane segments (helical) span residues 23–43 (LSGW…VPVV), 79–99 (TLWL…VGSA), 111–131 (VAAA…PLPY), 147–167 (VVVL…ATSG), 178–198 (WMGA…LPAV), 205–225 (TFYY…HVHS), and 256–276 (VTVV…ADLV). The Ferric oxidoreductase domain maps to 108 to 666 (LGRVAAAFMP…LAAGPQALVE (559 aa)). 308 to 314 (HPFTVAS) contributes to the FAD binding site. The chain crosses the membrane as a helical span at residues 392–412 (LMVVGGSAISFGLPFLRILNF). An NAD(+)-binding site is contributed by 431 to 439 (ILSQFRSNF). N-linked (GlcNAc...) asparagine glycosylation is found at N506 and N644.

The cofactor is FAD.

It is found in the membrane. It carries out the reaction 2 a Fe(II)-siderophore + NAD(+) + H(+) = 2 a Fe(III)-siderophore + NADH. In terms of biological role, is required for the uptake of Fe(3+) ions. May participate in the transport of electrons from cytoplasm to an extracellular substrate (Fe(3+) ion) via FAD and heme intermediates. Involved in iron homeostasis. The sequence is that of Probable ferric reductase transmembrane component (FRE8) from Eremothecium gossypii (strain ATCC 10895 / CBS 109.51 / FGSC 9923 / NRRL Y-1056) (Yeast).